Consider the following 509-residue polypeptide: MRRQSRIVASLLVLACASSGAFAHRKFNVHDDLLAYPQFRIKFPDGFILESQARAFLEQAPYSSPDLNDISEQTPLKDESEESIRDGSSGEKAKFSYEELSLEGQRYLCQIPVVEDGDSNRTKVEVNEEEERKELARATDRGLELLREMEGKCLYYISGWWSYSFCYMNQIKQFHALPSGGGVPNYPPMEDHTTHSFILGRFPQEEGQDEGKGAKSGKSSTELAELQTKGGSRYLVQRLESGDQCDLTGKNRKIEVQFHCNPQSTDRIAWIKELYTCSYLMLIYTPRLCNDVAFLPPQQEEVHTIECREILTPEEVTGWQAMHEYQLSQQLVESAEAPKHQVIGGIEVGAQRLVGTEGKRIEKGRVASIGEEKVDVVAKRVNGEVQLLSAEELKKFDLDEAKIEELRKKLEEWAKGKDWTLEIVTGNGAYLRGVVDTDEDEEDGYENEEGETDKREQRENTQETTGQPGQPGHQEETESGQAGHPMDDRSEDGEDPDVDGSEEIFKDEL.

The N-terminal stretch at 1 to 23 is a signal peptide; it reads MRRQSRIVASLLVLACASSGAFA. The span at 64–74 shows a compositional bias: polar residues; sequence SPDLNDISEQT. The tract at residues 64–91 is disordered; that stretch reads SPDLNDISEQTPLKDESEESIRDGSSGE. The segment covering 75-91 has biased composition (basic and acidic residues); that stretch reads PLKDESEESIRDGSSGE. An N-linked (GlcNAc...) asparagine glycan is attached at Asn120. The MRH domain occupies 151–291; sequence GKCLYYISGW…LIYTPRLCND (141 aa). Residues Cys153 and Cys166 are joined by a disulfide bond. Trp160, Trp161, Gln173, Asp246, Arg252, Glu273, and Tyr279 together coordinate a mannooligosaccharide derivative. 2 disulfides stabilise this stretch: Cys245/Cys277 and Cys260/Cys289. Positions 433-509 are disordered; it reads GVVDTDEDEE…GSEEIFKDEL (77 aa). Over residues 436-451 the composition is skewed to acidic residues; that stretch reads DTDEDEEDGYENEEGE. The span at 452–461 shows a compositional bias: basic and acidic residues; the sequence is TDKREQRENT. Acidic residues predominate over residues 489–502; the sequence is RSEDGEDPDVDGSE. Residues 506–509 carry the Prevents secretion from ER motif; the sequence is KDEL.

Belongs to the OS-9 family. In terms of assembly, interacts with missfolded ER lumenal proteins.

The protein resides in the endoplasmic reticulum membrane. In terms of biological role, lectin involved in the quality control of the secretory pathway. As a member of the endoplasmic reticulum-associated degradation lumenal (ERAD-L) surveillance system, targets misfolded endoplasmic reticulum lumenal glycoproteins for degradation. This is Protein OS-9 homolog (yos9) from Emericella nidulans (strain FGSC A4 / ATCC 38163 / CBS 112.46 / NRRL 194 / M139) (Aspergillus nidulans).